We begin with the raw amino-acid sequence, 64 residues long: Small, acid-soluble spore protein beta (64 aa).

It belongs to the alpha/beta-type SASP family.

In terms of biological role, SASP are bound to spore DNA. They are double-stranded DNA-binding proteins that cause DNA to change to an a-like conformation. They protect the DNA backbone from chemical and enzymatic cleavage and are thus involved in dormant spore's high resistance to UV light. This chain is Small, acid-soluble spore protein beta, found in Paraclostridium bifermentans (Clostridium bifermentans).